Reading from the N-terminus, the 2124-residue chain is Genome polyprotein (2124 aa).

Residue G2 is the site of N-myristoyl glycine; by host attachment. Positions 873 to 880 (VARDLLLI) are host EIF4E binding. Residues 1102 to 1264 (VQIATYFRNF…SAATKNGKLD (163 aa)) enclose the SF3 helicase domain. 1130 to 1137 (GKPGVGKS) lines the ATP pocket. Residues 1415–1437 (DKPKEEEEEPEEKKEKKTEESKE) are compositionally biased toward basic and acidic residues. The disordered stretch occupies residues 1415–1446 (DKPKEEEEEPEEKKEKKTEESKEAAGPYNGPT). The residue at position 1442 (Y1442) is an O-(5'-phospho-RNA)-tyrosine. Residues 1459–1648 (SPLMDMEKKI…VGTRLTARMI (190 aa)) form the Peptidase C3 domain. Catalysis depends on for protease 3C activity residues H1501, D1535, and C1612. The RdRp catalytic domain occupies 1893–2011 (PYLYDFDYSN…ASKFELDLVM (119 aa)). Catalysis depends on for RdRp activity residues D1899 and D1997.

Belongs to the picornaviruses polyprotein family. Interacts with host EIF4E. In terms of assembly, interacts with host IFIH1/MDA5; this interaction inhibits the induction of the IFN-beta signal pathway. In terms of processing, specific enzymatic cleavages by the viral protease in vivo yield a variety of precursors and mature proteins. The polyprotein seems to be cotranslationally cleaved at the 2A/2B junction by a ribosomal skip from one codon to the next without formation of a peptide bond. This process would release the P1-2A peptide from the translational complex. During virion maturation, immature virions are rendered infectious following cleavage of VP0 into VP4 and VP2. This maturation seems to be an autocatalytic event triggered by the presence of RNA in the capsid and is followed by a conformational change of the particle. Post-translationally, myristoylation is required during RNA encapsidation and formation of the mature virus particle. In terms of processing, uridylylated by the polymerase and is covalently linked to the 5'-end of genomic RNA. This uridylylated form acts as a nucleotide-peptide primer for the polymerase.

It is found in the virion. The protein localises to the host cytoplasm. The protein resides in the host nucleus. It localises to the host nucleolus. Its subcellular location is the host cytoplasmic vesicle membrane. The enzyme catalyses RNA(n) + a ribonucleoside 5'-triphosphate = RNA(n+1) + diphosphate. It carries out the reaction ATP + H2O = ADP + phosphate + H(+). It catalyses the reaction Selective cleavage of Gln-|-Gly bond in the poliovirus polyprotein. In other picornavirus reactions Glu may be substituted for Gln, and Ser or Thr for Gly.. Functionally, forms an icosahedral capsid of pseudo T=3 symmetry with capsid proteins VP2 and VP3. Together they form an icosahedral capsid composed of 60 copies of each VP1, VP2, and VP3, with a diameter of approximately 300 Angstroms. VP4 lies on the inner surface of the protein shell formed by VP1, VP2 and VP3. All the three latter proteins contain a beta-sheet structure called beta-barrel jelly roll. VP1 is situated at the 12 fivefold axes, whereas VP2 and VP3 are located at the quasi-sixfold axes. Lies on the inner surface of the capsid shell. After binding to the host receptor, the capsid undergoes conformational changes. Capsid protein VP4 is released, capsid protein VP1 N-terminus is externalized, and together, they shape a pore in the host membrane through which the viral genome is translocated into the host cell cytoplasm. After genome has been released, the channel shrinks. In terms of biological role, VP0 precursor is a component of immature procapsids. Its function is as follows. Involved in host translation shutoff by inhibiting cap-dependent mRNA translation. Nuclear localization is required for this function. The resulting inhibition of cellular protein synthesis serves to ensure maximal viral gene expression and to evade host immune response. Functionally, affects membrane integrity and causes an increase in membrane permeability. Associates with and induces structural rearrangements of intracellular membranes. It displays RNA-binding, nucleotide binding and NTPase activities. Interacts with IFIH1/MDA5 to inhibit the induction of the IFN-beta signal pathway. In terms of biological role, serves as membrane anchor via its hydrophobic domain. Its function is as follows. Forms a primer, VPg-pU, which is utilized by the polymerase for the initiation of RNA chains. Functionally, cysteine protease that generates mature viral proteins from the precursor polyprotein. In addition to its proteolytic activity, it binds to viral RNA, and thus influences viral genome replication. RNA and substrate cooperatively bind to the protease. Cleaves host PABP1, this cleavage is important for viral replication. Cleaves host TANK and disrupts the TANK-TBK1-IKKepsilon-IRF3 complex, thereby inhibiting the induction of the IFN-beta signal pathway. Replicates the genomic and antigenomic RNAs by recognizing replications specific signals. Performs VPg uridylylation. The protein is Genome polyprotein of Cosavirus A (isolate Human/Pakistan/0553/-) (HCoSV-A).